The following is a 545-amino-acid chain: Serine/threonine-protein kinase PAK 1 (545 aa).

Residues 1–77 (MSNNGLDIQD…KEKERPEISL (77 aa)) are disordered. S2 carries the N-acetylserine modification. S21 carries the post-translational modification Phosphoserine; by PKB and autocatalysis. Position 57 is a phosphoserine; by autocatalysis (S57). A compositionally biased stretch (basic and acidic residues) spans 68–77 (KEKERPEISL). The segment at 70–140 (KERPEISLPS…YNSKKTSNSQ (71 aa)) is autoregulatory region. The 14-residue stretch at 75–88 (ISLPSDFEHTIHVG) folds into the CRIB domain. The segment at 75–105 (ISLPSDFEHTIHVGFDAVTGEFTGMPEQWAR) is GTPase-binding. Residue T84 is modified to Phosphothreonine; by OXSR1. S115 carries the post-translational modification Phosphoserine. 2 positions are modified to phosphotyrosine: Y131 and Y142. Residue S144 is modified to Phosphoserine; by autocatalysis. S149 carries the phosphoserine modification. The residue at position 153 (Y153) is a Phosphotyrosine; by JAK2. A disordered region spans residues 159–198 (LNVKAVSETPAVPPVSEDEDDDDDDATPPPVIAPRPEHTK). S174 bears the Phosphoserine mark. The span at 174 to 184 (SEDEDDDDDDA) shows a compositional bias: acidic residues. A Phosphothreonine modification is found at T185. S199 is modified (phosphoserine; by autocatalysis). Y201 carries the phosphotyrosine; by JAK2 modification. The residue at position 204 (S204) is a Phosphoserine. Residues 211-251 (VTPTRDVATSPISPTENNTTPPDALTRNTEKQKKKPKMSDE) form a disordered region. Residues T212 and T219 each carry the phosphothreonine modification. Phosphoserine is present on residues S220 and S223. Positions 220–231 (SPISPTENNTTP) are enriched in polar residues. Residues T225, T229, and T230 each carry the phosphothreonine modification. The Protein kinase domain occupies 270-521 (YTRFEKIGQG…AKELLQHQFL (252 aa)). Residue 276 to 284 (IGQGASGTV) coordinates ATP. The residue at position 285 (Y285) is a Phosphotyrosine; by JAK2. Residues K299 and 345-347 (EYL) contribute to the ATP site. The Proton acceptor role is filled by D389. The residue at position 423 (T423) is a Phosphothreonine; by autocatalysis, BRSK2 and PDPK1.

The protein belongs to the protein kinase superfamily. STE Ser/Thr protein kinase family. STE20 subfamily. In terms of assembly, homodimer; homodimerization results in autoinhibition. Active as monomer. Interacts with GIT1. Component of cytoplasmic complexes, which also contains PXN, ARHGEF7 and GIT1. Interacts with NISCH. Interacts with DVL1; mediates the formation of a DVL1, MUSK and PAK1 ternary complex involved in AChR clustering. Binds to the caspase-cleaved p110 isoform of CDC2L1 and CDC2L2, p110C, but not the full-length proteins. Interacts with ARHGEF7. Interacts tightly with GTP-bound but not GDP-bound CDC42/P21 and RAC1. Interacts with SCRIB. Interacts with PDPK1. Interacts (via kinase domain) with RAF1. Interacts with NCK1 and NCK2. Interacts with TBCB. Interacts with BRSK2. Interacts with SNAI1. Interacts with CIB1 isoform 2. Interacts with CIB1 (via N-terminal region); the interaction is direct, promotes PAK1 activity and occurs in a calcium-dependent manner. Interacts with INPP5K. Interacts with gamma-tubulin. Interacts with RHOU; the interaction promotes PAK1 activation. Requires Mg(2+) as cofactor. In terms of processing, autophosphorylated in trans, meaning that in a dimer, one kinase molecule phosphorylates the other one. Activated by autophosphorylation at Thr-423 in response to a conformation change, triggered by interaction with GTP-bound CDC42 or RAC1. Activated by phosphorylation at Thr-423 by BRSK2 and by PDPK1. Phosphorylated by JAK2 in response to PRL; this increases PAK1 kinase activity. Phosphorylated at Ser-21 by PKB/AKT; this reduces interaction with NCK1 and association with focal adhesion sites. Upon DNA damage, phosphorylated at Thr-212 and translocates to the nucleoplasm. Phosphorylated at tyrosine residues, which can be enhanced by NTN1. In terms of tissue distribution, overexpressed in gastric cancer cells and tissues (at protein level).

It localises to the cytoplasm. Its subcellular location is the cell junction. The protein localises to the focal adhesion. The protein resides in the cell projection. It is found in the lamellipodium. It localises to the cell membrane. Its subcellular location is the ruffle membrane. The protein localises to the invadopodium. The protein resides in the nucleus. It is found in the nucleoplasm. It localises to the chromosome. Its subcellular location is the cytoskeleton. The protein localises to the microtubule organizing center. The protein resides in the centrosome. The catalysed reaction is L-seryl-[protein] + ATP = O-phospho-L-seryl-[protein] + ADP + H(+). It carries out the reaction L-threonyl-[protein] + ATP = O-phospho-L-threonyl-[protein] + ADP + H(+). Activated by binding small G proteins. Binding of GTP-bound CDC42 or RAC1 to the autoregulatory region releases monomers from the autoinhibited dimer, and enables activation by phosphorylation of Thr-423. Phosphorylation of Thr-84 by OXSR1 inhibits activation. Functionally, protein kinase involved in intracellular signaling pathways downstream of integrins and receptor-type kinases that plays an important role in cytoskeleton dynamics, in cell adhesion, migration, proliferation, apoptosis, mitosis, and in vesicle-mediated transport processes. Can directly phosphorylate BAD and protects cells against apoptosis. Activated by interaction with CDC42 and RAC1. Functions as a GTPase effector that links the Rho-related GTPases CDC42 and RAC1 to the JNK MAP kinase pathway. Phosphorylates and activates MAP2K1, and thereby mediates activation of downstream MAP kinases. Involved in the reorganization of the actin cytoskeleton, actin stress fibers and of focal adhesion complexes. Phosphorylates the tubulin chaperone TBCB and thereby plays a role in the regulation of microtubule biogenesis and organization of the tubulin cytoskeleton. Plays a role in the regulation of insulin secretion in response to elevated glucose levels. Part of a ternary complex that contains PAK1, DVL1 and MUSK that is important for MUSK-dependent regulation of AChR clustering during the formation of the neuromuscular junction (NMJ). Activity is inhibited in cells undergoing apoptosis, potentially due to binding of CDC2L1 and CDC2L2. Phosphorylates MYL9/MLC2. Phosphorylates RAF1 at 'Ser-338' and 'Ser-339' resulting in: activation of RAF1, stimulation of RAF1 translocation to mitochondria, phosphorylation of BAD by RAF1, and RAF1 binding to BCL2. Phosphorylates SNAI1 at 'Ser-246' promoting its transcriptional repressor activity by increasing its accumulation in the nucleus. In podocytes, promotes NR3C2 nuclear localization. Required for atypical chemokine receptor ACKR2-induced phosphorylation of LIMK1 and cofilin (CFL1) and for the up-regulation of ACKR2 from endosomal compartment to cell membrane, increasing its efficiency in chemokine uptake and degradation. In synapses, seems to mediate the regulation of F-actin cluster formation performed by SHANK3, maybe through CFL1 phosphorylation and inactivation. Plays a role in RUFY3-mediated facilitating gastric cancer cells migration and invasion. In response to DNA damage, phosphorylates MORC2 which activates its ATPase activity and facilitates chromatin remodeling. In neurons, plays a crucial role in regulating GABA(A) receptor synaptic stability and hence GABAergic inhibitory synaptic transmission through its role in F-actin stabilization. In hippocampal neurons, necessary for the formation of dendritic spines and excitatory synapses; this function is dependent on kinase activity and may be exerted by the regulation of actomyosin contractility through the phosphorylation of myosin II regulatory light chain (MLC). Along with GIT1, positively regulates microtubule nucleation during interphase. Phosphorylates FXR1, promoting its localization to stress granules and activity. Phosphorylates ILK on 'Thr-173' and 'Ser-246', promoting nuclear export of ILK. The chain is Serine/threonine-protein kinase PAK 1 from Homo sapiens (Human).